Here is a 194-residue protein sequence, read N- to C-terminus: Adenylate kinase (194 aa).

10–15 (GAGKGT) contacts ATP. Positions 30–59 (STGDMLRAAVKAETEIGKKAKAVMDAGELV) are NMP. AMP-binding positions include threonine 31, arginine 36, 57-59 (ELV), 85-88 (GYPR), and glutamine 92. An LID region spans residues 126-142 (KRAEDAQAAGQPVRRDD). Arginine 127 contacts ATP. The AMP site is built by arginine 139 and arginine 150. An ATP-binding site is contributed by alanine 178.

The protein belongs to the adenylate kinase family. In terms of assembly, monomer.

The protein localises to the cytoplasm. The catalysed reaction is AMP + ATP = 2 ADP. It functions in the pathway purine metabolism; AMP biosynthesis via salvage pathway; AMP from ADP: step 1/1. In terms of biological role, catalyzes the reversible transfer of the terminal phosphate group between ATP and AMP. Plays an important role in cellular energy homeostasis and in adenine nucleotide metabolism. The sequence is that of Adenylate kinase from Chelativorans sp. (strain BNC1).